We begin with the raw amino-acid sequence, 258 residues long: GCN5-related N-acetyltransferase 2, chloroplastic (258 aa).

Residues 1-58 constitute a chloroplast transit peptide; that stretch reads MLLIPISSSSSSSISPPPNSYPSNHHSLFFSNLTFPIQHGSRKLKTLRLRANFWESIR. The interval 107–194 is interaction with begomoviruses NSP protein; that stretch reads IIFSSGGEID…DHAFNATIWD (88 aa). The 152-residue stretch at 107–258 folds into the N-acetyltransferase domain; that stretch reads IIFSSGGEID…GIKGMFWYPK (152 aa). Residues 195–197, 203–208, 231–233, and tyrosine 238 each bind acetyl-CoA; these read VLV, GQGLGK, and DSQ. The active-site Proton donor is the tyrosine 238.

Belongs to the acetyltransferase family. GNAT subfamily. In terms of assembly, oligomer. Interacts with begomoviruses NSP but not with CP. This interaction may allow NSP to recruit NSI monomers to acetylate viral genome-bound CP and thus regulate nuclear export of viral genome by NSP. S-sulfhydrated and activated by hydrogen sulfide H(2)S to promote melatonin accumulation and subsequent melatonin-dependent stomotal closure to combat osmotic stress. In terms of processing, autoacetylated. In terms of tissue distribution, highly expressed in cauline leaves and seeds, at lower levels in stems, siliques, inflorescences and rosettes leaves and at very low levels in roots. Expressed in the xylem parenchyma and phloem of the leaves and root, and in guard cells of young leaves.

It localises to the plastid. It is found in the chloroplast. The catalysed reaction is 5-methoxytryptamine + acetyl-CoA = melatonin + CoA + H(+). It catalyses the reaction L-lysyl-[histone] + acetyl-CoA = N(6)-acetyl-L-lysyl-[histone] + CoA + H(+). It carries out the reaction L-lysyl-[protein] + acetyl-CoA = N(6)-acetyl-L-lysyl-[protein] + CoA + H(+). The enzyme catalyses serotonin + acetyl-CoA = N-acetylserotonin + CoA + H(+). The catalysed reaction is N-terminal L-alanyl-[protein] + acetyl-CoA = N-terminal N(alpha)-acetyl-L-alanyl-[protein] + CoA + H(+). It catalyses the reaction N-terminal L-seryl-[protein] + acetyl-CoA = N-terminal N(alpha)-acetyl-L-seryl-[protein] + CoA + H(+). It carries out the reaction N-terminal L-valyl-[protein] + acetyl-CoA = N-terminal N(alpha)-acetyl-L-valyl-[protein] + CoA + H(+). The enzyme catalyses N-terminal glycyl-[protein] + acetyl-CoA = N-terminal N(alpha)-acetylglycyl-[protein] + CoA + H(+). The catalysed reaction is an N-terminal L-alpha-aminoacyl-[protein] + acetyl-CoA = N-terminal N(alpha)-acetyl-L-alpha-aminoacyl-[protein] + CoA + H(+). It catalyses the reaction N-terminal L-threonyl-[protein] + acetyl-CoA = N-terminal N(alpha)-acetyl-L-threonyl-[protein] + CoA + H(+). It carries out the reaction N-terminal L-methionyl-[protein] + acetyl-CoA = N-terminal N(alpha)-acetyl-L-methionyl-[protein] + CoA + H(+). The enzyme catalyses N-terminal L-leucyl-[protein] + acetyl-CoA = N-terminal N(alpha)-acetyl-L-leucyl-[protein] + CoA + H(+). With respect to regulation, inhibited by the viral nuclear shuttle protein (NSP) that binds to the region required for oligomerization. In terms of biological role, protein acetyltransferase with dual specificity triggering both N-alpha-acetylation (NTA), with a preference for alanine, serine, threonine, methionine and to a lower extent valine as substrates (can also use glycine and leucine), and epsilon-lysine acetylation (KA) of several plastid proteins. Triggers lysine acetylation in KEA1 and KEA2. Acetylates in vitro histones H2A and H3. Does not act as a transcriptional activator but required for the dynamic reorganization of thylakoid protein complexes and grana during photosynthetic state transitions. Involved in melatonin biosynthesis by catalyzing the formation of N-acetylserotonin (NAS) from serotonin and of melatonin (N-acetyl-5-methoxytryptamine) from 5-methoxytryptamine (5-MT). By triggering melatonin biosynthesis, contributes to the chloroplast protein quality control (CPQC), which plays a pivotal role in starch synthesis, and confers melatonin-associated tolerance to high light (HL) stress. Prevents the accumulation of oil and anthocyanin content in mature seeds and avoids seed germination in a melatonin-dependent manner, but promotes mucilage production in the seed coat. Contributes to melatonin-mediated anthocyanin production in cold-exposed seedlings. Implicated in melatonin-monitored circadian dynamics of stomatal aperture to minimize night water loss and promote drought tolerance, partly by triggering hydrogen sulfide H(2)S-dependent stomotal closure in response to osmotic stress. Its function is as follows. (Microbial infection) Required for begomovirus infection and systemic spread. In case of begomoviruses infection, acetylates the capsid protein (CP), but not the nuclear shuttle protein (NSP). Stimulates melatonin-triggered defense responses to the necrotrophic Botrytis cinerea. The polypeptide is GCN5-related N-acetyltransferase 2, chloroplastic (Arabidopsis thaliana (Mouse-ear cress)).